We begin with the raw amino-acid sequence, 259 residues long: Probable WRKY transcription factor 65 (259 aa).

A compositionally biased stretch (basic and acidic residues) spans 1 to 17 (MKRGLDMARSYNDHESS). Disordered stretches follow at residues 1-101 (MKRG…RCSS) and 126-165 (TSEH…EEED). Positions 18-31 (QETGPESPNSSTFN) are enriched in polar residues. Over residues 47–69 (RSVEKRVVNVPMKEMEGSRHKGD) the composition is skewed to basic and acidic residues. The WRKY DNA-binding region spans 68 to 134 (GDTTPPSDSW…YTSEHNHPWP (67 aa)). Positions 154–165 (EPEVEPEAEEED) are enriched in acidic residues.

The protein resides in the nucleus. Transcription factor. Interacts specifically with the W box (5'-(T)TGAC[CT]-3'), a frequently occurring elicitor-responsive cis-acting element. In Arabidopsis thaliana (Mouse-ear cress), this protein is Probable WRKY transcription factor 65 (WRKY65).